Consider the following 398-residue polypeptide: MTIRNQRFSLLKQPIFSILNQHLINYPTPSNLNYWAGFGPLAGICLVIQIVTGVFLAMHYTPHVDLAFNSVEHIMRDVEGGWFLRYMHANGASMFLIVVHFHMFRSLYYGSYSSPREFVRCSGVVIFLLMIVTAFIGYVPPWGQMSFWGATVITSLASAIPVVGDTIVTWLWGGFSVGNATLNRFFSLHYLLPFLLVGASILHLGALHQYGSNNPLGINSYTDKIASYPYYYVKDLVGWVAFAIFSSIFIFYAPNVLGHPDNYIPANPMPTPPHIVPEWYFLPIHAILRSIPDKAGGVAAIAPVFICLLALPFLNQSMYVRSAKFRPIYHIIYLLFLADRLLLGWIGCQPVEAPFVTIGQISPFVFFLFFAIMPIPGRVQRENPNYFSENFAFSYPKK.

Helical transmembrane passes span 38–58 (FGPL…FLAM), 82–104 (WFLR…FHMF), 119–139 (VRCS…IGYV), and 185–205 (FFSL…LHLG). His88 and His102 together coordinate heme b. Positions 189 and 203 each coordinate heme b. His208 contributes to the a ubiquinone binding site. 4 helical membrane passes run 231–251 (YYVK…IFIF), 295–316 (AGGV…FLNQ), 328–348 (IYHI…WIGC), and 355–374 (FVTI…AIMP).

Belongs to the cytochrome b family. The main subunits of complex b-c1 are: cytochrome b, cytochrome c1 and the Rieske protein. The cofactor is heme b.

It localises to the mitochondrion inner membrane. Its function is as follows. Component of the ubiquinol-cytochrome c reductase complex (complex III or cytochrome b-c1 complex) that is part of the mitochondrial respiratory chain. The b-c1 complex mediates electron transfer from ubiquinol to cytochrome c. Contributes to the generation of a proton gradient across the mitochondrial membrane that is then used for ATP synthesis. The sequence is that of Cytochrome b (MT-CYB) from Daucus carota (Wild carrot).